We begin with the raw amino-acid sequence, 39 residues long: Photosystem II reaction center protein L (39 aa).

A helical membrane pass occupies residues 18–38; the sequence is SLYLGLLFVFVTGVLMSSYFF.

The protein belongs to the PsbL family. As to quaternary structure, PSII is composed of 1 copy each of membrane proteins PsbA, PsbB, PsbC, PsbD, PsbE, PsbF, PsbH, PsbI, PsbJ, PsbK, PsbL, PsbM, PsbT, PsbX, PsbY, PsbZ, Psb30/Ycf12, peripheral proteins PsbO, CyanoQ (PsbQ), PsbU, PsbV and a large number of cofactors. It forms dimeric complexes.

It is found in the cellular thylakoid membrane. One of the components of the core complex of photosystem II (PSII). PSII is a light-driven water:plastoquinone oxidoreductase that uses light energy to abstract electrons from H(2)O, generating O(2) and a proton gradient subsequently used for ATP formation. It consists of a core antenna complex that captures photons, and an electron transfer chain that converts photonic excitation into a charge separation. This subunit is found at the monomer-monomer interface and is required for correct PSII assembly and/or dimerization. This chain is Photosystem II reaction center protein L, found in Synechococcus sp. (strain CC9605).